The primary structure comprises 194 residues: RNA polymerase II subunit A C-terminal domain phosphatase SSU72 like protein 3 (194 aa).

The protein belongs to the SSU72 phosphatase family.

The protein resides in the nucleus. It catalyses the reaction O-phospho-L-seryl-[protein] + H2O = L-seryl-[protein] + phosphate. The catalysed reaction is O-phospho-L-threonyl-[protein] + H2O = L-threonyl-[protein] + phosphate. Protein phosphatase that catalyzes the dephosphorylation of the C-terminal domain of RNA polymerase II. Plays a role in RNA processing and termination. In Homo sapiens (Human), this protein is RNA polymerase II subunit A C-terminal domain phosphatase SSU72 like protein 3.